A 376-amino-acid chain; its full sequence is Alcohol dehydrogenase 1 (376 aa).

Ser2 is subject to N-acetylserine. 7 residues coordinate Zn(2+): Cys47, His68, Cys98, Cys101, Cys104, Cys112, and Cys176. Residues 201 to 206 (GLGGVG), Asp225, and Lys230 each bind NAD(+). An N6-succinyllysine modification is found at Lys235. Residue 294-296 (VGV) coordinates NAD(+). Position 341 is an N6-succinyllysine (Lys341). Arg371 contacts NAD(+).

It belongs to the zinc-containing alcohol dehydrogenase family. Class-I subfamily. As to quaternary structure, dimer of identical or non-identical chains of three types (A, B, C), which are coded by 3 separate genes at different loci. It depends on Zn(2+) as a cofactor.

It localises to the cytoplasm. The enzyme catalyses a primary alcohol + NAD(+) = an aldehyde + NADH + H(+). It catalyses the reaction a secondary alcohol + NAD(+) = a ketone + NADH + H(+). This Rattus norvegicus (Rat) protein is Alcohol dehydrogenase 1 (Adh1).